The sequence spans 182 residues: ATP synthase subunit b, chloroplastic (182 aa).

The chain crosses the membrane as a helical span at residues 33 to 51 (VLNIAILLSGVIYLGRNFL).

The protein belongs to the ATPase B chain family. As to quaternary structure, F-type ATPases have 2 components, F(1) - the catalytic core - and F(0) - the membrane proton channel. F(1) has five subunits: alpha(3), beta(3), gamma(1), delta(1), epsilon(1). F(0) has four main subunits: a(1), b(1), b'(1) and c(10-14). The alpha and beta chains form an alternating ring which encloses part of the gamma chain. F(1) is attached to F(0) by a central stalk formed by the gamma and epsilon chains, while a peripheral stalk is formed by the delta, b and b' chains.

The protein localises to the plastid. The protein resides in the chloroplast thylakoid membrane. In terms of biological role, f(1)F(0) ATP synthase produces ATP from ADP in the presence of a proton or sodium gradient. F-type ATPases consist of two structural domains, F(1) containing the extramembraneous catalytic core and F(0) containing the membrane proton channel, linked together by a central stalk and a peripheral stalk. During catalysis, ATP synthesis in the catalytic domain of F(1) is coupled via a rotary mechanism of the central stalk subunits to proton translocation. Its function is as follows. Component of the F(0) channel, it forms part of the peripheral stalk, linking F(1) to F(0). This is ATP synthase subunit b, chloroplastic from Guillardia theta (Cryptophyte).